We begin with the raw amino-acid sequence, 262 residues long: Shikimate dehydrogenase (NADP(+)) (262 aa).

Shikimate contacts are provided by residues 14–16 (SAS) and threonine 60. Lysine 64 acts as the Proton acceptor in catalysis. Residues asparagine 85 and aspartate 100 each contribute to the shikimate site. Residues 121–125 (GAGGA), 145–150 (NRTAER), and phenylalanine 203 each bind NADP(+). Tyrosine 205 serves as a coordination point for shikimate. An NADP(+)-binding site is contributed by glycine 227.

Belongs to the shikimate dehydrogenase family. In terms of assembly, homodimer.

It carries out the reaction shikimate + NADP(+) = 3-dehydroshikimate + NADPH + H(+). It participates in metabolic intermediate biosynthesis; chorismate biosynthesis; chorismate from D-erythrose 4-phosphate and phosphoenolpyruvate: step 4/7. Involved in the biosynthesis of the chorismate, which leads to the biosynthesis of aromatic amino acids. Catalyzes the reversible NADPH linked reduction of 3-dehydroshikimate (DHSA) to yield shikimate (SA). This chain is Shikimate dehydrogenase (NADP(+)), found in Pyrobaculum aerophilum (strain ATCC 51768 / DSM 7523 / JCM 9630 / CIP 104966 / NBRC 100827 / IM2).